A 287-amino-acid polypeptide reads, in one-letter code: Homoserine kinase (287 aa).

78–88 is an ATP binding site; that stretch reads PLSRGLGSSST.

The protein belongs to the GHMP kinase family. Homoserine kinase subfamily.

The protein resides in the cytoplasm. The enzyme catalyses L-homoserine + ATP = O-phospho-L-homoserine + ADP + H(+). It participates in amino-acid biosynthesis; L-threonine biosynthesis; L-threonine from L-aspartate: step 4/5. Its function is as follows. Catalyzes the ATP-dependent phosphorylation of L-homoserine to L-homoserine phosphate. The chain is Homoserine kinase from Lactobacillus gasseri (strain ATCC 33323 / DSM 20243 / BCRC 14619 / CIP 102991 / JCM 1131 / KCTC 3163 / NCIMB 11718 / NCTC 13722 / AM63).